The primary structure comprises 459 residues: UDP-N-acetylmuramate--L-alanine ligase (459 aa).

ATP is bound at residue 113 to 119; it reads GSHGKTT.

It belongs to the MurCDEF family.

The protein localises to the cytoplasm. The enzyme catalyses UDP-N-acetyl-alpha-D-muramate + L-alanine + ATP = UDP-N-acetyl-alpha-D-muramoyl-L-alanine + ADP + phosphate + H(+). Its pathway is cell wall biogenesis; peptidoglycan biosynthesis. Its function is as follows. Cell wall formation. This Persephonella marina (strain DSM 14350 / EX-H1) protein is UDP-N-acetylmuramate--L-alanine ligase.